A 363-amino-acid chain; its full sequence is MNELLLNLVDPLHQWFLGLGDGGVVLWSVLKILLIAVPVIVSVAFYVVWERKLIGWMHVRHGPMYVGMGIFQAFADVFKLLFKEILQPSSSHKAMFIIAPLLTLAPAFAAWSVVPFDAKLVLSNANVGLLYLLAMTSLGVYGIILAGWASNSKYAFLGAMRSAAQVVSYEIAMGFALVGVMIASGSVNLSQIVFAQAGNSGFFDWFLIPLFPLFIVYWVSGVAETNRAPFDVVEGESEIVAGHMVEYSGGAFALFFLAEYANMILVSFLISIFFLGGWLSPIQGWVNADISPWIDWLWKGGWPWLLMKVFFFASAYIWFRASFPRYRYDQIMRLGWKVFIPLTIVWIAVTALMVFYGVIQKGV.

10 consecutive transmembrane segments (helical) span residues Val29–Trp49, Gly62–Phe82, Phe96–Phe116, Val127–Gly147, Ala163–Ala183, Phe202–Val222, Glu238–Leu257, Ile264–Val286, Lys299–Phe319, and Phe339–Ile359.

It belongs to the complex I subunit 1 family. In terms of assembly, NDH-1 is composed of 14 different subunits. Subunits NuoA, H, J, K, L, M, N constitute the membrane sector of the complex.

It is found in the cell inner membrane. It carries out the reaction a quinone + NADH + 5 H(+)(in) = a quinol + NAD(+) + 4 H(+)(out). In terms of biological role, NDH-1 shuttles electrons from NADH, via FMN and iron-sulfur (Fe-S) centers, to quinones in the respiratory chain. The immediate electron acceptor for the enzyme in this species is believed to be ubiquinone. Couples the redox reaction to proton translocation (for every two electrons transferred, four hydrogen ions are translocated across the cytoplasmic membrane), and thus conserves the redox energy in a proton gradient. This subunit may bind ubiquinone. The protein is NADH-quinone oxidoreductase subunit H of Xanthomonas oryzae pv. oryzae (strain PXO99A).